We begin with the raw amino-acid sequence, 666 residues long: MDIKEKIEELRAELHRHNYNYYVLNAPEISDKEFDDKMRELQDLELAHPEYKDENSPTMRVGSDINKNFTQVAHKYPMLSLANTYSEGEVTDFYERVRKALNEDFEICCEMKYDGTSISLTYEDGKLVRAVTRGDGEKGDDVTDNVKTIRSIPLVLHGDNYPSSFEIRGEILMPWEVFEELNREKEAREEPLFANPRNAASGTLKLQNSSIVASRKLDAYLYYLLGDNLPCDGHYENLQEAAKWGFKISDLTRKCQTLEEVFEFINYWDVERKNLPVATDGIVLKVNSLRQQKNLGFTAKSPRWAIAYKFQAERALTRLNMVTYQVGRTGAVTPVANLDAVQLSGTVVKRASLHNADIIEGLDLHIGDMVYVEKGGEIIPKITGVDKDARSFMLGEKVRFITNCPECGSKLIRYEGEAAHYCPNETACPPQIKGKIEHFISRKAMNIDGLGPETVDMFYRLGLIHNTADLYELKADDIKGLDRMGEKSAENIITGIEQSKTVPFERVIFALGIRFVGETVAKKIAKSFGDIDELRQADLEKLISIDEIGEKIARSILLYFSNESNRELVGRLKEAGLQLYRTEEDMSGYTDKLAGQSIVISGVFTHHSRDEYKDLIEKNGGKNVGSISAKTSFILAGDNMGPAKLEKAKKLGVTILSEDEFLKLIS.

NAD(+)-binding positions include Asp-31–Asp-35, Ser-80–Leu-81, and Glu-110. Lys-112 acts as the N6-AMP-lysine intermediate in catalysis. 4 residues coordinate NAD(+): Arg-133, Glu-170, Lys-285, and Lys-309. Zn(2+)-binding residues include Cys-404, Cys-407, Cys-422, and Cys-428. Residues Gly-588–Ser-666 form the BRCT domain.

The protein belongs to the NAD-dependent DNA ligase family. LigA subfamily. It depends on Mg(2+) as a cofactor. Mn(2+) is required as a cofactor.

The catalysed reaction is NAD(+) + (deoxyribonucleotide)n-3'-hydroxyl + 5'-phospho-(deoxyribonucleotide)m = (deoxyribonucleotide)n+m + AMP + beta-nicotinamide D-nucleotide.. DNA ligase that catalyzes the formation of phosphodiester linkages between 5'-phosphoryl and 3'-hydroxyl groups in double-stranded DNA using NAD as a coenzyme and as the energy source for the reaction. It is essential for DNA replication and repair of damaged DNA. The chain is DNA ligase from Bacteroides thetaiotaomicron (strain ATCC 29148 / DSM 2079 / JCM 5827 / CCUG 10774 / NCTC 10582 / VPI-5482 / E50).